A 67-amino-acid chain; its full sequence is Probable Sec-independent protein translocase protein TatE (67 aa).

A helical transmembrane segment spans residues Ile-4 to Gly-21.

It belongs to the TatA/E family. TatE subfamily.

The protein resides in the cell inner membrane. Part of the twin-arginine translocation (Tat) system that transports large folded proteins containing a characteristic twin-arginine motif in their signal peptide across membranes. TatE shares overlapping functions with TatA. This is Probable Sec-independent protein translocase protein TatE from Salmonella dublin (strain CT_02021853).